A 184-amino-acid polypeptide reads, in one-letter code: (2E)-enoyl-[ACP] glycyltransferase (184 aa).

Belongs to the FcoT family.

It carries out the reaction a (3R)-3-[(carboxymethyl)amino]fatty acid + holo-[ACP] + H(+) = a (2E)-enoyl-[ACP] + glycine + H2O. It catalyses the reaction (3R)-3-[(carboxylmethyl)amino]decanoate + holo-[ACP] + H(+) = (2E)-decenoyl-[ACP] + glycine + H2O. Its function is as follows. Involved in the biosynthesis of a unique class of isonitrile lipopeptides (INLPs) that seem to play a role in metal acquisition in M.marinum. Catalyzes a Michael addition of glycine to the beta-position of an alpha,beta-unsaturated fatty acyl-[ACP], producing a (3R)-3-[(carboxymethyl)amino]fatty acid. Acts on the (2E)-decenoyl moiety loaded on the acyl-carrier protein MmaB, forming the product (3R)-3-[(carboxymethyl)amino]decanoate released from MmaB. This Mycobacterium marinum (strain ATCC BAA-535 / M) protein is (2E)-enoyl-[ACP] glycyltransferase.